We begin with the raw amino-acid sequence, 245 residues long: Octanoyltransferase (245 aa).

The BPL/LPL catalytic domain maps to 54-238; it reads GEATELVWLL…AFENIFGETR (185 aa). Residues 92–99, 167–169, and 180–182 each bind substrate; these read RGGQLTYH, AIG, and GIA. C198 serves as the catalytic Acyl-thioester intermediate.

The protein belongs to the LipB family.

The protein resides in the cytoplasm. The enzyme catalyses octanoyl-[ACP] + L-lysyl-[protein] = N(6)-octanoyl-L-lysyl-[protein] + holo-[ACP] + H(+). The protein operates within protein modification; protein lipoylation via endogenous pathway; protein N(6)-(lipoyl)lysine from octanoyl-[acyl-carrier-protein]: step 1/2. In terms of biological role, catalyzes the transfer of endogenously produced octanoic acid from octanoyl-acyl-carrier-protein onto the lipoyl domains of lipoate-dependent enzymes. Lipoyl-ACP can also act as a substrate although octanoyl-ACP is likely to be the physiological substrate. The polypeptide is Octanoyltransferase (Rhodopseudomonas palustris (strain ATCC BAA-98 / CGA009)).